The following is a 220-amino-acid chain: Uracil-DNA glycosylase 1 (220 aa).

The Proton acceptor role is filled by Asp65.

The protein belongs to the uracil-DNA glycosylase (UDG) superfamily. UNG family.

The protein localises to the cytoplasm. It carries out the reaction Hydrolyzes single-stranded DNA or mismatched double-stranded DNA and polynucleotides, releasing free uracil.. Functionally, excises uracil residues from the DNA which can arise as a result of misincorporation of dUMP residues by DNA polymerase or due to deamination of cytosine. This Bacteroides fragilis (strain ATCC 25285 / DSM 2151 / CCUG 4856 / JCM 11019 / LMG 10263 / NCTC 9343 / Onslow / VPI 2553 / EN-2) protein is Uracil-DNA glycosylase 1.